We begin with the raw amino-acid sequence, 433 residues long: Serine--tRNA ligase (433 aa).

235–237 (TSE) is a binding site for L-serine. Residue 266–268 (RSE) coordinates ATP. Glutamate 289 contributes to the L-serine binding site. An ATP-binding site is contributed by 353 to 356 (EISS). Serine 388 provides a ligand contact to L-serine.

This sequence belongs to the class-II aminoacyl-tRNA synthetase family. Type-1 seryl-tRNA synthetase subfamily. Homodimer. The tRNA molecule binds across the dimer.

The protein localises to the cytoplasm. The catalysed reaction is tRNA(Ser) + L-serine + ATP = L-seryl-tRNA(Ser) + AMP + diphosphate + H(+). The enzyme catalyses tRNA(Sec) + L-serine + ATP = L-seryl-tRNA(Sec) + AMP + diphosphate + H(+). Its pathway is aminoacyl-tRNA biosynthesis; selenocysteinyl-tRNA(Sec) biosynthesis; L-seryl-tRNA(Sec) from L-serine and tRNA(Sec): step 1/1. Its function is as follows. Catalyzes the attachment of serine to tRNA(Ser). Is also able to aminoacylate tRNA(Sec) with serine, to form the misacylated tRNA L-seryl-tRNA(Sec), which will be further converted into selenocysteinyl-tRNA(Sec). The polypeptide is Serine--tRNA ligase (Burkholderia ambifaria (strain ATCC BAA-244 / DSM 16087 / CCUG 44356 / LMG 19182 / AMMD) (Burkholderia cepacia (strain AMMD))).